A 240-amino-acid polypeptide reads, in one-letter code: Small ribosomal subunit protein uS2 (240 aa).

It belongs to the universal ribosomal protein uS2 family.

This chain is Small ribosomal subunit protein uS2, found in Haemophilus influenzae (strain 86-028NP).